The primary structure comprises 134 residues: Phosphoribosyl-AMP cyclohydrolase (134 aa).

Position 93 (aspartate 93) interacts with Mg(2+). Cysteine 94 is a Zn(2+) binding site. The Mg(2+) site is built by aspartate 95 and aspartate 97. Residues cysteine 112 and cysteine 119 each contribute to the Zn(2+) site.

It belongs to the PRA-CH family. As to quaternary structure, homodimer. Requires Mg(2+) as cofactor. Zn(2+) is required as a cofactor.

It is found in the cytoplasm. It carries out the reaction 1-(5-phospho-beta-D-ribosyl)-5'-AMP + H2O = 1-(5-phospho-beta-D-ribosyl)-5-[(5-phospho-beta-D-ribosylamino)methylideneamino]imidazole-4-carboxamide. Its pathway is amino-acid biosynthesis; L-histidine biosynthesis; L-histidine from 5-phospho-alpha-D-ribose 1-diphosphate: step 3/9. In terms of biological role, catalyzes the hydrolysis of the adenine ring of phosphoribosyl-AMP. The sequence is that of Phosphoribosyl-AMP cyclohydrolase from Caulobacter sp. (strain K31).